Consider the following 167-residue polypeptide: Disulfide bond formation protein B (167 aa).

The Cytoplasmic segment spans residues 1-12 (MFLNLLDAPRRL). Residues 13–29 (LALVALGCVALLAFGLY) form a helical membrane-spanning segment. Residues 30–47 (LQHVVGLEPCPMCIVQRY) lie on the Periplasmic side of the membrane. Cysteine 39 and cysteine 42 form a disulfide bridge. The chain crosses the membrane as a helical span at residues 48–63 (ALVLVAIVAGLTAITS). Over 64 to 69 (NKKGLI) the chain is Cytoplasmic. The chain crosses the membrane as a helical span at residues 70–87 (TGSGVLLLLAGFGAFVAA). At 88 to 143 (RQSFLQWYPPEVASCGRDFYGMIETFPLQRAIPMIFKGSGDCAKVDWTFLGGSIAN) the chain is on the periplasmic side. A disulfide bridge connects residues cysteine 102 and cysteine 129. A helical membrane pass occupies residues 144–162 (WSFVCFAVIGLTALTLIAR). Topologically, residues 163–167 (LARQR) are cytoplasmic.

It belongs to the DsbB family.

The protein localises to the cell inner membrane. Functionally, required for disulfide bond formation in some periplasmic proteins. Acts by oxidizing the DsbA protein. This chain is Disulfide bond formation protein B, found in Polaromonas naphthalenivorans (strain CJ2).